Here is a 372-residue protein sequence, read N- to C-terminus: MEGLSLLQLPRDKFRKSSFFVWVIILFQKAFSMPLGVVTNSTLEVTEIDQLVCKDHLASTDQLKSVGLNLEGSGVSTDIPSATKRWGFRSGVPPQVVSYEAGEWAENCYNLEIKKPDGSECLPPPPDGVRGFPRCRYVHKAQGTGPCPGDYAFHKDGAFFLYDRLASTVIYRGVNFAEGVIAFLILAKPKETFLQSPPIREAANYTENTSSYYATSYLEYEIENFGAQHSTTLFKINNNTFVLLDRPHTPQFLFQLNDTIQLHQQLSNTTGKLIWTLDANINADIGEWAFWENKKISPNNYVEKSCLSKLYRSTRQKTMMRHRRELQREESPTGPPGSIRTWFQRIPLGWFHCTYQKGKQHCRLRIRQKVEE.

The first 32 residues, 1 to 32 (MEGLSLLQLPRDKFRKSSFFVWVIILFQKAFS), serve as a signal peptide directing secretion. N40 carries N-linked (GlcNAc...) asparagine; by host glycosylation. 2 disulfide bridges follow: C108-C135 and C121-C147. N-linked (GlcNAc...) asparagine; by host glycosylation is found at N204, N208, N238, N257, and N268. The segment at 320 to 340 (MRHRRELQREESPTGPPGSIR) is disordered.

The protein belongs to the filoviruses glycoprotein family. Homodimer; disulfide-linked. The homodimers are linked by two disulfide bonds in a parallel orientation. As to quaternary structure, monomer. In terms of processing, this precursor is processed into mature sGP and delta-peptide by host furin or furin-like proteases. The cleavage site corresponds to the furin optimal cleavage sequence [KR]-X-[KR]-R. Post-translationally, N-glycosylated. O-glycosylated.

Its subcellular location is the secreted. Functionally, seems to possess an anti-inflammatory activity as it can reverse the barrier-decreasing effects of TNF alpha. Might therefore contribute to the lack of inflammatory reaction seen during infection in spite the of extensive necrosis and massive virus production. Does not seem to be involved in activation of primary macrophages. Does not seem to interact specifically with neutrophils. In terms of biological role, viroporin that permeabilizes mammalian cell plasma membranes. It acts by altering permeation of ionic compounds and small molecules. This activity may lead to viral enterotoxic activity. This is Pre-small/secreted glycoprotein (GP) from Sudan ebolavirus (strain Boniface-76) (SEBOV).